The chain runs to 1483 residues: Heme-responsive zinc finger transcription factor HAP1 (1483 aa).

A compositionally biased stretch (polar residues) spans 1–50 (MSNTPYNSSVPSIASMTQSSVSRSPNMHTATTPGANTSSNSPPLHMSSDS). A disordered region spans residues 1–56 (MSNTPYNSSVPSIASMTQSSVSRSPNMHTATTPGANTSSNSPPLHMSSDSSKIKRK). Residues Cys-64, Cys-67, Cys-74, Cys-81, Cys-84, and Cys-93 each coordinate Zn(2+). Positions 64 to 93 (CTICRKRKVKCDKLRPHCQQCTKTGVAHLC) form a DNA-binding region, zn(2)-C6 fungal-type. Residues 105 to 134 (EKELLKDNELKKLRERVKSLEKTLSKVHSS) adopt a coiled-coil conformation. The span at 162 to 176 (VNANTGSASSASHMH) shows a compositional bias: polar residues. A disordered region spans residues 162–208 (VNANTGSASSASHMHQQQQQQQQQEQQQDFSRSANANANSSSLSISN). Over residues 177-208 (QQQQQQQQQEQQQDFSRSANANANSSSLSISN) the composition is skewed to low complexity. Residues 244–444 (KGDPYLKLLW…NTIPHHQPQS (201 aa)) form a heme-responsive; required for HMC formation region. 6 HRM repeats span residues 280–285 (KCPINH), 299–304 (KCPVDH), 323–328 (KCPVDH), 347–352 (RCPVDH), 389–394 (KCPVDH), and 415–420 (RCPIDH). Polar residues-rich tracts occupy residues 432 to 447 (STHN…SGSH) and 706 to 734 (QLNA…NPTL). 2 disordered regions span residues 432–458 (STHN…NRKH) and 706–767 (QLNA…KENQ). The segment covering 735 to 759 (NNNMSAATTNSSSRSGSADSRSGSN) has biased composition (low complexity). Residues 1192-1197 (KCPVYQ) form an HRM 7 repeat. 2 disordered regions span residues 1266-1289 (DGYI…SNGL) and 1386-1411 (NTDT…ASNS). Polar residues predominate over residues 1388–1411 (DTSANGSALSTLTSPQGSDLASNS).

In terms of assembly, binds DNA as a homodimer. Interacts with SRO9 and YDJ1. In the absence of heme, binds to at least four cellular proteins, including YDJ1 and SRO9, forming a high-molecular-weight complex (HMC) which results in repression of its activity and dictates its DNA-binding specificity.

It is found in the nucleus. Its function is as follows. Regulation of oxygen dependent gene expression. It modulates the expression of Iso-1 (CYP1) and Iso-2 (CYP3) cytochrome c. In response to heme, promotes transcription of genes encoding functions required for respiration, controlling oxidative damage and repression of anaerobic genes. Binds to the sequence 5'-CGGNNNTNNCGG-3'. The sequence is that of Heme-responsive zinc finger transcription factor HAP1 (HAP1) from Saccharomyces cerevisiae (strain JAY291) (Baker's yeast).